The primary structure comprises 214 residues: NADH-quinone oxidoreductase subunit C (214 aa).

This sequence belongs to the complex I 30 kDa subunit family. In terms of assembly, NDH-1 is composed of 14 different subunits. Subunits NuoB, C, D, E, F, and G constitute the peripheral sector of the complex.

The protein localises to the cell inner membrane. The enzyme catalyses a quinone + NADH + 5 H(+)(in) = a quinol + NAD(+) + 4 H(+)(out). NDH-1 shuttles electrons from NADH, via FMN and iron-sulfur (Fe-S) centers, to quinones in the respiratory chain. The immediate electron acceptor for the enzyme in this species is believed to be ubiquinone. Couples the redox reaction to proton translocation (for every two electrons transferred, four hydrogen ions are translocated across the cytoplasmic membrane), and thus conserves the redox energy in a proton gradient. The polypeptide is NADH-quinone oxidoreductase subunit C (Francisella tularensis subsp. holarctica (strain LVS)).